A 367-amino-acid chain; its full sequence is 3-isopropylmalate dehydrogenase (367 aa).

An NAD(+)-binding site is contributed by 75 to 88 (GPKWDGIERSKRPE). Substrate-binding residues include Arg95, Arg105, Arg133, and Asp230. Asp230, Asp254, and Asp258 together coordinate Mg(2+). 288–300 (GSAPDIAGQDIAN) contacts NAD(+).

It belongs to the isocitrate and isopropylmalate dehydrogenases family. LeuB type 1 subfamily. In terms of assembly, homodimer. The cofactor is Mg(2+). Requires Mn(2+) as cofactor.

It localises to the cytoplasm. The catalysed reaction is (2R,3S)-3-isopropylmalate + NAD(+) = 4-methyl-2-oxopentanoate + CO2 + NADH. Its pathway is amino-acid biosynthesis; L-leucine biosynthesis; L-leucine from 3-methyl-2-oxobutanoate: step 3/4. Catalyzes the oxidation of 3-carboxy-2-hydroxy-4-methylpentanoate (3-isopropylmalate) to 3-carboxy-4-methyl-2-oxopentanoate. The product decarboxylates to 4-methyl-2 oxopentanoate. The sequence is that of 3-isopropylmalate dehydrogenase from Psychrobacter cryohalolentis (strain ATCC BAA-1226 / DSM 17306 / VKM B-2378 / K5).